The sequence spans 285 residues: Probable fructose-bisphosphate aldolase (285 aa).

Ser-50 lines the D-glyceraldehyde 3-phosphate pocket. The active-site Proton donor is the Asp-85. The Zn(2+) site is built by His-86, Asp-107, Glu-137, and His-181. Residue Gly-182 coordinates dihydroxyacetone phosphate. Zn(2+) is bound at residue His-209. Residues 210 to 212 (GGT) and 231 to 234 (NVNT) each bind dihydroxyacetone phosphate. 2 positions are modified to phosphothreonine: Thr-212 and Thr-234.

Belongs to the class II fructose-bisphosphate aldolase family. Requires Zn(2+) as cofactor. Post-translationally, phosphorylated during sporulation.

It catalyses the reaction beta-D-fructose 1,6-bisphosphate = D-glyceraldehyde 3-phosphate + dihydroxyacetone phosphate. Its pathway is carbohydrate degradation; glycolysis; D-glyceraldehyde 3-phosphate and glycerone phosphate from D-glucose: step 4/4. Functionally, catalyzes the aldol condensation of dihydroxyacetone phosphate (DHAP or glycerone-phosphate) with glyceraldehyde 3-phosphate (G3P) to form fructose 1,6-bisphosphate (FBP) in gluconeogenesis and the reverse reaction in glycolysis. The chain is Probable fructose-bisphosphate aldolase (fbaA) from Bacillus subtilis (strain 168).